A 259-amino-acid polypeptide reads, in one-letter code: Chloroplastic group IIB intron splicing facilitator CRS2, chloroplastic (259 aa).

The segment at 1-21 (MSLAVATPASARLSPLTTSSP) is disordered. A chloroplast-targeting transit peptide spans 1 to 49 (MSLAVATPASARLSPLTTSSPEPCRRRRLLLSAAAPLRRTRLRRRIAVV). Tyrosine 77 is a binding site for tRNA. The active-site Proton acceptor is the histidine 82. Positions 127, 129, and 175 each coordinate tRNA.

Belongs to the PTH family. CRS2 subfamily. Part of large ribonucleo-protein complexes that include group IIB introns and either CAF1 or CAF2.

It is found in the plastid. The protein localises to the chloroplast stroma. Functionally, required for the splicing of group IIB introns in chloroplasts. The sequence is that of Chloroplastic group IIB intron splicing facilitator CRS2, chloroplastic from Oryza sativa subsp. japonica (Rice).